We begin with the raw amino-acid sequence, 277 residues long: Undecaprenyl-diphosphatase (277 aa).

Transmembrane regions (helical) follow at residues 1–21 (MTWIEAIILGLVQGLTEFLPI), 41–61 (GAAFTAITQLGTELAVLIYFW), 90–110 (WLIIVGSIPIAVLGLLLEDWI), 114–134 (FRSLWITATMLIVFGVLLALA), 191–211 (AFLLAVPAVFASGLYKLYTSL), 224–244 (ETLVATAVAFVVAYAVIAWLM), and 255–275 (FVWYRILLGGVLFALLGAGVI).

This sequence belongs to the UppP family.

Its subcellular location is the cell membrane. The enzyme catalyses di-trans,octa-cis-undecaprenyl diphosphate + H2O = di-trans,octa-cis-undecaprenyl phosphate + phosphate + H(+). Functionally, catalyzes the dephosphorylation of undecaprenyl diphosphate (UPP). Confers resistance to bacitracin. The sequence is that of Undecaprenyl-diphosphatase from Micrococcus luteus (strain ATCC 4698 / DSM 20030 / JCM 1464 / CCM 169 / CCUG 5858 / IAM 1056 / NBRC 3333 / NCIMB 9278 / NCTC 2665 / VKM Ac-2230) (Micrococcus lysodeikticus).